The sequence spans 174 residues: U1 small nuclear ribonucleoprotein C (174 aa).

The Matrin-type zinc finger occupies 4–36 (YYCDYCDKYLTHDSPSVRKSHTVGKQHKLAVQL). Low complexity-rich tracts occupy residues 82–109 (QQQQ…QQGM) and 122–140 (PHQF…FQPP). The tract at residues 82–174 (QQQQQQQQQQ…QHNQPTIPGL (93 aa)) is disordered. Positions 141–163 (HHQHHPHQQHQQHQQHQHQHQHQ) are enriched in basic residues. Residues 164 to 174 (QQHNQPTIPGL) show a composition bias toward low complexity.

The protein belongs to the U1 small nuclear ribonucleoprotein C family. Component of the U1 snRNP. The U1 snRNP is composed of the U1 snRNA and the 7 core Sm proteins SNRPB, SNRPD1, SNRPD2, SNRPD3, SNRPE, SNRPF and SNRPG that assemble in a heptameric protein ring on the Sm site of the small nuclear RNA to form the core snRNP, and at least 3 U1 snRNP-specific proteins SNRNP70/U1-70K, SNRPA/U1-A and SNRPC/U1-C. SNRPC/U1-C interacts with U1 snRNA and the 5' splice-site region of the pre-mRNA.

Its subcellular location is the nucleus. Functionally, component of the spliceosomal U1 snRNP, which is essential for recognition of the pre-mRNA 5' splice-site and the subsequent assembly of the spliceosome. SNRPC/U1-C is directly involved in initial 5' splice-site recognition for both constitutive and regulated alternative splicing. The interaction with the 5' splice-site seems to precede base-pairing between the pre-mRNA and the U1 snRNA. Stimulates commitment or early (E) complex formation by stabilizing the base pairing of the 5' end of the U1 snRNA and the 5' splice-site region. This Dictyostelium discoideum (Social amoeba) protein is U1 small nuclear ribonucleoprotein C.